Consider the following 450-residue polypeptide: Glucose-6-phosphate isomerase (450 aa).

Glutamate 291 acts as the Proton donor in catalysis. Catalysis depends on residues histidine 312 and lysine 426.

Belongs to the GPI family.

It is found in the cytoplasm. The enzyme catalyses alpha-D-glucose 6-phosphate = beta-D-fructose 6-phosphate. Its pathway is carbohydrate biosynthesis; gluconeogenesis. The protein operates within carbohydrate degradation; glycolysis; D-glyceraldehyde 3-phosphate and glycerone phosphate from D-glucose: step 2/4. Catalyzes the reversible isomerization of glucose-6-phosphate to fructose-6-phosphate. The sequence is that of Glucose-6-phosphate isomerase from Clostridium botulinum (strain Loch Maree / Type A3).